We begin with the raw amino-acid sequence, 429 residues long: Glutamate-1-semialdehyde 2,1-aminomutase (429 aa).

An N6-(pyridoxal phosphate)lysine modification is found at Lys270.

It belongs to the class-III pyridoxal-phosphate-dependent aminotransferase family. HemL subfamily. In terms of assembly, homodimer. Requires pyridoxal 5'-phosphate as cofactor.

It localises to the cytoplasm. It carries out the reaction (S)-4-amino-5-oxopentanoate = 5-aminolevulinate. Its pathway is porphyrin-containing compound metabolism; protoporphyrin-IX biosynthesis; 5-aminolevulinate from L-glutamyl-tRNA(Glu): step 2/2. The polypeptide is Glutamate-1-semialdehyde 2,1-aminomutase (Cupriavidus pinatubonensis (strain JMP 134 / LMG 1197) (Cupriavidus necator (strain JMP 134))).